The following is a 239-amino-acid chain: 1-(5-phosphoribosyl)-5-[(5-phosphoribosylamino)methylideneamino] imidazole-4-carboxamide isomerase (239 aa).

The Proton acceptor role is filled by D8. The active-site Proton donor is the D129.

Belongs to the HisA/HisF family.

The protein localises to the cytoplasm. It catalyses the reaction 1-(5-phospho-beta-D-ribosyl)-5-[(5-phospho-beta-D-ribosylamino)methylideneamino]imidazole-4-carboxamide = 5-[(5-phospho-1-deoxy-D-ribulos-1-ylimino)methylamino]-1-(5-phospho-beta-D-ribosyl)imidazole-4-carboxamide. It functions in the pathway amino-acid biosynthesis; L-histidine biosynthesis; L-histidine from 5-phospho-alpha-D-ribose 1-diphosphate: step 4/9. The chain is 1-(5-phosphoribosyl)-5-[(5-phosphoribosylamino)methylideneamino] imidazole-4-carboxamide isomerase from Legionella pneumophila subsp. pneumophila (strain Philadelphia 1 / ATCC 33152 / DSM 7513).